A 110-amino-acid chain; its full sequence is Large ribosomal subunit protein uL22 (110 aa).

The protein belongs to the universal ribosomal protein uL22 family. Part of the 50S ribosomal subunit.

In terms of biological role, this protein binds specifically to 23S rRNA; its binding is stimulated by other ribosomal proteins, e.g. L4, L17, and L20. It is important during the early stages of 50S assembly. It makes multiple contacts with different domains of the 23S rRNA in the assembled 50S subunit and ribosome. Functionally, the globular domain of the protein is located near the polypeptide exit tunnel on the outside of the subunit, while an extended beta-hairpin is found that lines the wall of the exit tunnel in the center of the 70S ribosome. The protein is Large ribosomal subunit protein uL22 of Bdellovibrio bacteriovorus (strain ATCC 15356 / DSM 50701 / NCIMB 9529 / HD100).